A 128-amino-acid polypeptide reads, in one-letter code: MIVRTLDECRDSERRVASETWESVRMLLKNDNMGFSFHITTIYQDTETHIHYKNHLESVYCMSGEGEIEVIGGETYPIKPGTLYILDKHDEHYLRAYKDKEMVMACVFNPPITGTEVHDENGVYPVLD.

It belongs to the ectoine synthase family.

The enzyme catalyses (2S)-4-acetamido-2-aminobutanoate = L-ectoine + H2O. The protein operates within amine and polyamine biosynthesis; ectoine biosynthesis; L-ectoine from L-aspartate 4-semialdehyde: step 3/3. Catalyzes the circularization of gamma-N-acetyl-alpha,gamma-diaminobutyric acid (ADABA) to ectoine (1,4,5,6-tetrahydro-2-methyl-4-pyrimidine carboxylic acid), which is an excellent osmoprotectant. The protein is L-ectoine synthase of Aliivibrio fischeri (strain MJ11) (Vibrio fischeri).